Here is an 83-residue protein sequence, read N- to C-terminus: Toxin To12 (83 aa).

The signal sequence occupies residues 1-19; that stretch reads MKGLILFICGFMMIGVILA. Residues 20–82 form the LCN-type CS-alpha/beta domain; that stretch reads KEGYPMDHEG…VWDYYNNKCG (63 aa). 4 disulfides stabilise this stretch: cysteine 30–cysteine 81, cysteine 34–cysteine 57, cysteine 42–cysteine 62, and cysteine 46–cysteine 64. A Cysteine amide modification is found at cysteine 81.

This sequence belongs to the long (4 C-C) scorpion toxin superfamily. Sodium channel inhibitor family. Beta subfamily. Expressed by the venom gland.

It localises to the secreted. Beta toxins bind voltage-independently at site-4 of sodium channels (Nav) and shift the voltage of activation toward more negative potentials thereby affecting sodium channel activation and promoting spontaneous and repetitive firing. The polypeptide is Toxin To12 (Tityus obscurus (Amazonian scorpion)).